The following is a 512-amino-acid chain: Lysine--tRNA ligase (512 aa).

2 residues coordinate Mg(2+): glutamate 408 and glutamate 415.

Belongs to the class-II aminoacyl-tRNA synthetase family. In terms of assembly, homodimer. Mg(2+) is required as a cofactor.

The protein resides in the cytoplasm. It carries out the reaction tRNA(Lys) + L-lysine + ATP = L-lysyl-tRNA(Lys) + AMP + diphosphate. This chain is Lysine--tRNA ligase, found in Prochlorococcus marinus (strain MIT 9215).